A 104-amino-acid chain; its full sequence is ATP-dependent Clp protease adapter protein ClpS (104 aa).

Belongs to the ClpS family. Binds to the N-terminal domain of the chaperone ClpA.

In terms of biological role, involved in the modulation of the specificity of the ClpAP-mediated ATP-dependent protein degradation. This chain is ATP-dependent Clp protease adapter protein ClpS, found in Desulforapulum autotrophicum (strain ATCC 43914 / DSM 3382 / VKM B-1955 / HRM2) (Desulfobacterium autotrophicum).